The chain runs to 279 residues: Glutamate racemase (279 aa).

Substrate is bound by residues 13–14 and 45–46; these read DS and YG. The active-site Proton donor/acceptor is the Cys76. Residue 77–78 coordinates substrate; the sequence is NT. The active-site Proton donor/acceptor is Cys185. Substrate is bound at residue 186 to 187; it reads TH.

Belongs to the aspartate/glutamate racemases family.

It carries out the reaction L-glutamate = D-glutamate. The protein operates within cell wall biogenesis; peptidoglycan biosynthesis. Functionally, provides the (R)-glutamate required for cell wall biosynthesis. The chain is Glutamate racemase from Picosynechococcus sp. (strain ATCC 27264 / PCC 7002 / PR-6) (Agmenellum quadruplicatum).